We begin with the raw amino-acid sequence, 456 residues long: Exodeoxyribonuclease 7 large subunit (456 aa).

This sequence belongs to the XseA family. Heterooligomer composed of large and small subunits.

It is found in the cytoplasm. The enzyme catalyses Exonucleolytic cleavage in either 5'- to 3'- or 3'- to 5'-direction to yield nucleoside 5'-phosphates.. Functionally, bidirectionally degrades single-stranded DNA into large acid-insoluble oligonucleotides, which are then degraded further into small acid-soluble oligonucleotides. The chain is Exodeoxyribonuclease 7 large subunit from Shigella boydii serotype 4 (strain Sb227).